The primary structure comprises 36 residues: Photosystem I reaction center subunit VIII (36 aa).

Residues 6–28 traverse the membrane as a helical segment; it reads LPSIFVPLVGLMFPAIAMASLSL.

The protein belongs to the PsaI family.

It is found in the plastid. The protein resides in the chloroplast thylakoid membrane. In terms of biological role, may help in the organization of the PsaL subunit. This Calycanthus floridus var. glaucus (Eastern sweetshrub) protein is Photosystem I reaction center subunit VIII.